Here is a 273-residue protein sequence, read N- to C-terminus: Bis(5'-nucleosyl)-tetraphosphatase, symmetrical (273 aa).

This sequence belongs to the Ap4A hydrolase family.

The enzyme catalyses P(1),P(4)-bis(5'-adenosyl) tetraphosphate + H2O = 2 ADP + 2 H(+). Its function is as follows. Hydrolyzes diadenosine 5',5'''-P1,P4-tetraphosphate to yield ADP. The chain is Bis(5'-nucleosyl)-tetraphosphatase, symmetrical from Histophilus somni (strain 129Pt) (Haemophilus somnus).